An 89-amino-acid chain; its full sequence is Small ribosomal subunit protein bS20 (89 aa).

The protein belongs to the bacterial ribosomal protein bS20 family.

Binds directly to 16S ribosomal RNA. This Helicobacter pylori (strain ATCC 700392 / 26695) (Campylobacter pylori) protein is Small ribosomal subunit protein bS20.